A 75-amino-acid chain; its full sequence is MSRICQITGKKRMIGNNRSHALNATKRKFLINIQYHRFWIADEKRFIKLRVSTNGMRYIDKKGIETVIRKINMKK.

Belongs to the bacterial ribosomal protein bL28 family.

This is Large ribosomal subunit protein bL28 from Buchnera aphidicola subsp. Acyrthosiphon pisum (strain 5A).